A 438-amino-acid chain; its full sequence is Thymidine phosphorylase (438 aa).

The protein belongs to the thymidine/pyrimidine-nucleoside phosphorylase family. In terms of assembly, homodimer.

It catalyses the reaction thymidine + phosphate = 2-deoxy-alpha-D-ribose 1-phosphate + thymine. Its pathway is pyrimidine metabolism; dTMP biosynthesis via salvage pathway; dTMP from thymine: step 1/2. The enzymes which catalyze the reversible phosphorolysis of pyrimidine nucleosides are involved in the degradation of these compounds and in their utilization as carbon and energy sources, or in the rescue of pyrimidine bases for nucleotide synthesis. In Colwellia psychrerythraea (strain 34H / ATCC BAA-681) (Vibrio psychroerythus), this protein is Thymidine phosphorylase.